We begin with the raw amino-acid sequence, 716 residues long: DEAD-box ATP-dependent RNA helicase 31 (716 aa).

The interval 99–188 (GILKSDDEDE…LRLEDESSDE (90 aa)) is disordered. The span at 110-121 (DRSRGRNQEKRG) shows a compositional bias: basic and acidic residues. Residues 144–153 (SRIQGKSSEA) show a composition bias toward polar residues. Positions 155–188 (FRGRKETSFSRDREDEKGLRKREDLRLEDESSDE) are enriched in basic and acidic residues. The Q motif motif lies at 248–276 (TRFDHYPLSPLSLKAIKDAGYETMTVVQE). Residues 279–462 (LPIILKGKDV…LVALRRDHEF (184 aa)) enclose the Helicase ATP-binding domain. 292–299 (AKTGTGKT) is an ATP binding site. The DEAD box motif lies at 410–413 (DEAD). Positions 497-643 (LREHIMGNVD…IDPETVKKVQ (147 aa)) constitute a Helicase C-terminal domain.

Belongs to the DEAD box helicase family.

The enzyme catalyses ATP + H2O = ADP + phosphate + H(+). This chain is DEAD-box ATP-dependent RNA helicase 31 (RH31), found in Arabidopsis thaliana (Mouse-ear cress).